The chain runs to 265 residues: Protein Pars_0096 (265 aa).

The protein belongs to the CinA family.

This Pyrobaculum arsenaticum (strain DSM 13514 / JCM 11321 / PZ6) protein is Protein Pars_0096.